Consider the following 100-residue polypeptide: Small ribosomal subunit protein uS14c (100 aa).

The segment at 1-31 is disordered; sequence MARKSLIQREKKRQKLEQKYHSIRRSSKKEI.

This sequence belongs to the universal ribosomal protein uS14 family. In terms of assembly, part of the 30S ribosomal subunit.

The protein resides in the plastid. It is found in the chloroplast. Its function is as follows. Binds 16S rRNA, required for the assembly of 30S particles. This chain is Small ribosomal subunit protein uS14c, found in Nicotiana tomentosiformis (Tobacco).